We begin with the raw amino-acid sequence, 375 residues long: MQCALYDAGRCRSCQWITQPIPEQLSAKTADLKNLLADFPVEEWCAPVSGPEQGFRNKAKMVVSGSVEKPLLGMLHRDGTPEDLCDCPLYPASFAPVFAALKPFIARAGLTPYNVARKRGELKYILLTESQSDGGMMLRFVLRSDTKLAQLRKALPWLQEQLPQLKVITVNIQPVHMAIMEGETEIYLTEQQALAERFNDVPLWIRPQSFFQTNPAVASQLYATARDWVRQLPIKHMWDLFCGVGGFGLHCATPDMQLTGIEIAPEAIACAKQSAAELGLTRLQFQALDSTQFASAQGEVPELVLVNPPRRGIGKPLCDYLSTMAPRFIIYSSCNAQTMAKDIRELPGYRIERVQLFDMFPHTAHYEVLTLLVKQ.

Positions 3, 11, 14, and 87 each coordinate [4Fe-4S] cluster. S-adenosyl-L-methionine contacts are provided by Gln212, Phe241, Glu262, and Asn307. Cys334 serves as the catalytic Nucleophile.

It belongs to the class I-like SAM-binding methyltransferase superfamily. RNA M5U methyltransferase family. RlmC subfamily.

The enzyme catalyses uridine(747) in 23S rRNA + S-adenosyl-L-methionine = 5-methyluridine(747) in 23S rRNA + S-adenosyl-L-homocysteine + H(+). In terms of biological role, catalyzes the formation of 5-methyl-uridine at position 747 (m5U747) in 23S rRNA. This Escherichia coli O7:K1 (strain IAI39 / ExPEC) protein is 23S rRNA (uracil(747)-C(5))-methyltransferase RlmC.